We begin with the raw amino-acid sequence, 638 residues long: Protein NSP-INTERACTING KINASE 1 (638 aa).

Residues methionine 1 to glycine 31 form the signal peptide. Residues leucine 32 to alanine 248 lie on the Extracellular side of the membrane. Residues asparagine 92 and asparagine 103 are each glycosylated (N-linked (GlcNAc...) asparagine). 4 LRR repeats span residues leucine 104–leucine 128, arginine 130–leucine 152, glutamine 153–asparagine 175, and threonine 177–threonine 200. 5 N-linked (GlcNAc...) asparagine glycosylation sites follow: asparagine 162, asparagine 175, asparagine 188, asparagine 219, and asparagine 231. Residues isoleucine 249–leucine 269 form a helical membrane-spanning segment. The Cytoplasmic segment spans residues tryptophan 270–arginine 638. Threonine 309 carries the post-translational modification Phosphothreonine. A Protein kinase domain is found at phenylalanine 312 to glutamate 593. ATP is bound at residue leucine 318–valine 326. Threonine 335 bears the Phosphothreonine mark. ATP is bound at residue lysine 340. Phosphoserine occurs at positions 393 and 396. The interaction with geminivirus NSP protein stretch occupies residues tyrosine 422–leucine 502. The active-site Proton acceptor is the aspartate 435. 3 positions are modified to phosphothreonine: threonine 468, threonine 469, and threonine 474. At tyrosine 482 the chain carries Phosphotyrosine. Position 484 is a phosphoserine (serine 484). Phosphothreonine is present on threonine 485. Position 489 is a phosphoserine (serine 489). Threonine 566 is modified (phosphothreonine).

This sequence belongs to the protein kinase superfamily. Ser/Thr protein kinase family. As to quaternary structure, oligomer. Interacts with geminivirus nuclear shuttle protein (NSP). Interacts with RPL10A and RPL18B. Post-translationally, autophosphorylated. Expressed in seedlings, leaves, roots, stems and flowers.

It localises to the cell membrane. The enzyme catalyses L-seryl-[protein] + ATP = O-phospho-L-seryl-[protein] + ADP + H(+). The catalysed reaction is L-threonyl-[protein] + ATP = O-phospho-L-threonyl-[protein] + ADP + H(+). Inhibited by the viral nuclear shuttle protein (NSP) that binds to the region required for oligomerization. Involved in defense response to geminivirus and begomovirus infection via regulation of the nuclear trafficking of RPL10A. Phosphorylates RPL10A in vitro. Activation of NIK1 down-regulates cytosolic translation. This chain is Protein NSP-INTERACTING KINASE 1, found in Arabidopsis thaliana (Mouse-ear cress).